A 78-amino-acid chain; its full sequence is DNA-directed RNA polymerase subunit Rpo5 (78 aa).

It belongs to the archaeal Rpo5/eukaryotic RPB5 RNA polymerase subunit family. Part of the RNA polymerase complex.

The protein localises to the cytoplasm. The enzyme catalyses RNA(n) + a ribonucleoside 5'-triphosphate = RNA(n+1) + diphosphate. Functionally, DNA-dependent RNA polymerase (RNAP) catalyzes the transcription of DNA into RNA using the four ribonucleoside triphosphates as substrates. In Methanococcoides burtonii (strain DSM 6242 / NBRC 107633 / OCM 468 / ACE-M), this protein is DNA-directed RNA polymerase subunit Rpo5.